Consider the following 776-residue polypeptide: Glucocorticoid receptor (776 aa).

3 disordered regions span residues 1-25 (MDPKDLLKPSSGSPAVRGSPHYNDK), 47-86 (SCPTSTASQSNTRQQQHFQKQLTATGDSTNGLNNNVPQPD), and 394-415 (SSPGIRSDASPSPSTSSTSTGP). The interval 1–419 (MDPKDLLKPS…STSTGPPPKL (419 aa)) is modulating. Residues 47-83 (SCPTSTASQSNTRQQQHFQKQLTATGDSTNGLNNNVP) are compositionally biased toward polar residues. The segment covering 403 to 413 (SPSPSTSSTST) has biased composition (low complexity). 2 NR C4-type zinc fingers span residues 420-440 (CLVCSDEASGCHYGVLTCGSC) and 456-480 (CAGRNDCIIDKIRRKNCPACRYRKC). Positions 420–485 (CLVCSDEASG…RYRKCLQAGM (66 aa)) form a DNA-binding region, nuclear receptor. The segment at 486–522 (NLEARKTKKKIKGIQQSTTATARESPETSMTRTLVPA) is hinge. An NR LBD domain is found at 523 to 757 (SVAQLTPTLI…FPDMLSEIIS (235 aa)).

This sequence belongs to the nuclear hormone receptor family. NR3 subfamily. As to quaternary structure, heteromultimeric cytoplasmic complex with HSP90. Upon ligand binding the complex undergoes a conformation change and moves to the nucleus, where it dissociates. Binds to DNA as a homodimer, and as heterodimer with NR3C2. Interaction with numerous other transcription factors modulates transcription activation. As to expression, expressed in liver with relative abundance.

It localises to the cytoplasm. The protein localises to the nucleus. The protein resides in the mitochondrion. It is found in the cytoskeleton. Its subcellular location is the spindle. It localises to the microtubule organizing center. The protein localises to the centrosome. In terms of biological role, receptor for glucocorticoids (GC). Has a dual mode of action: as a transcription factor that binds to glucocorticoid response elements (GRE), both for nuclear and mitochondrial DNA, and as a modulator of other transcription factors. Affects inflammatory responses, cellular proliferation and differentiation in target tissues. Involved in chromatin remodeling. Plays a role in rapid mRNA degradation by binding to the 5' UTR of target mRNAs and interacting with PNRC2 in a ligand-dependent manner which recruits the RNA helicase UPF1 and the mRNA-decapping enzyme DCP1A, leading to RNA decay. Could act as a coactivator for STAT5-dependent transcription upon growth hormone (GH) stimulation and could reveal an essential role of hepatic GR in the control of body growth. Mediates glucocorticoid-induced apoptosis. Promotes accurate chromosome segregation during mitosis. May act as a tumor suppressor. May play a negative role in adipogenesis through the regulation of lipolytic and antilipogenic gene expression. The protein is Glucocorticoid receptor (nr3c1) of Xenopus laevis (African clawed frog).